The primary structure comprises 317 residues: Methionyl-tRNA formyltransferase (317 aa).

110-113 (SLLP) is a binding site for (6S)-5,6,7,8-tetrahydrofolate. The tract at residues 292–317 (RMKGEDFVRGKNVQPGDVLGEANEEN) is disordered.

The protein belongs to the Fmt family.

The catalysed reaction is L-methionyl-tRNA(fMet) + (6R)-10-formyltetrahydrofolate = N-formyl-L-methionyl-tRNA(fMet) + (6S)-5,6,7,8-tetrahydrofolate + H(+). Functionally, attaches a formyl group to the free amino group of methionyl-tRNA(fMet). The formyl group appears to play a dual role in the initiator identity of N-formylmethionyl-tRNA by promoting its recognition by IF2 and preventing the misappropriation of this tRNA by the elongation apparatus. The chain is Methionyl-tRNA formyltransferase from Bacillus velezensis (strain DSM 23117 / BGSC 10A6 / LMG 26770 / FZB42) (Bacillus amyloliquefaciens subsp. plantarum).